Consider the following 467-residue polypeptide: DEAD-box ATP-dependent RNA helicase CshA (467 aa).

The Q motif motif lies at 2–30 (TTFQELGLSQEVMKAIERMGFEETTPIQA). A Helicase ATP-binding domain is found at 33-203 (IPLSLQNKDV…ERFMNEPELV (171 aa)). 46–53 (AQTGTGKT) is an ATP binding site. A DEAD box motif is present at residues 151–154 (DEAD). Residues 214–374 (NIQQYYLEVH…RMKPPTLDEA (161 aa)) enclose the Helicase C-terminal domain. The disordered stretch occupies residues 428 to 467 (TTPVQLTEEPPLAVKREKKRGGRPDGSARSRTKKRRITAH). The span at 457–467 (SRTKKRRITAH) shows a compositional bias: basic residues.

This sequence belongs to the DEAD box helicase family. CshA subfamily. As to quaternary structure, oligomerizes, may be a member of the RNA degradosome.

The protein resides in the cytoplasm. The catalysed reaction is ATP + H2O = ADP + phosphate + H(+). Functionally, DEAD-box RNA helicase possibly involved in RNA degradation. Unwinds dsRNA in both 5'- and 3'-directions, has RNA-dependent ATPase activity. This Geobacillus kaustophilus (strain HTA426) protein is DEAD-box ATP-dependent RNA helicase CshA.